We begin with the raw amino-acid sequence, 115 residues long: Ustilagic acid biosynthesis cluster protein orf3 (115 aa).

The signal sequence occupies residues 1-38 (MTYSKIACSLGKRGIARAPNQASSFFLLLFLFAKFSQQ). Residues 42–62 (SPCLASSGVAKSRGPASTDRP) form a disordered region.

The protein operates within secondary metabolite biosynthesis. Part of the gene cluster that mediates the biosynthesis of the glycolipid biosurfactant ustilagic acid (UA). UA is a secreted cellobiose glycolipid that is toxic for many microorganisms and confers biocontrol activity to U.maydis. UA consists of 15,16-dihydroxypalmitic or 2,15,16-trihydroxypalmitic acid, which is O-glycosidically linked to cellobiose at its terminal hydroxyl group. In addition, the cellobiose moiety is acetylated and acylated with a short-chain hydroxy fatty acid. UA biosynthesis starts with omega-hydroxylation of palmitic acid catalyzed by the cytochrome P450 monooxygenase cyp1. Terminal hydroxylation of palmitic acid precedes subterminal hydroxylation catalyzed by the cytochrome P450 monooxygenase cyp2. Sequential glucosylation of the hydroxy fatty acid is probably catalyzed by the glycosyltransferase ugt1. The cellobiose lipid is further decorated by acetylation of the proximal glucose residue and by acylation with a short-chain beta-hydroxy fatty acid at the distal glucose residue. The acyltransferase uat1 may be a good candidate for catalyzing either acetylation or acylation of the cellobiose lipid. The fatty acid synthase fas2 may be involved in synthesis of the carbon backbone of the short-chain beta-hydroxy fatty acid esterified to the cellobiose disaccharide. The secreted UA consists of a mixture of both alpha-hydroxylated and non-hydroxylated glycolipids; therefore, alpha-hydroxylation of the long-chain fatty, catalyzed by the fatty acid hydroxylase ahd1, occurs late in UA biosynthesis and may be the last step before secretion. The protein is Ustilagic acid biosynthesis cluster protein orf3 of Mycosarcoma maydis (Corn smut fungus).